The primary structure comprises 72 residues: Translation initiation factor IF-1 1 (72 aa).

One can recognise an S1-like domain in the interval 1–72; that stretch reads MSKEDVIQMQ…TKGRIVFRAK (72 aa).

Belongs to the IF-1 family. In terms of assembly, component of the 30S ribosomal translation pre-initiation complex which assembles on the 30S ribosome in the order IF-2 and IF-3, IF-1 and N-formylmethionyl-tRNA(fMet); mRNA recruitment can occur at any time during PIC assembly.

It localises to the cytoplasm. Functionally, one of the essential components for the initiation of protein synthesis. Stabilizes the binding of IF-2 and IF-3 on the 30S subunit to which N-formylmethionyl-tRNA(fMet) subsequently binds. Helps modulate mRNA selection, yielding the 30S pre-initiation complex (PIC). Upon addition of the 50S ribosomal subunit IF-1, IF-2 and IF-3 are released leaving the mature 70S translation initiation complex. The chain is Translation initiation factor IF-1 1 from Thiobacillus denitrificans (strain ATCC 25259 / T1).